The sequence spans 224 residues: Synaptogyrin-2 (224 aa).

Met1 carries the N-acetylmethionine modification. At Ser3 the chain carries Phosphoserine. The 152-residue stretch at 20-171 folds into the MARVEL domain; that stretch reads FLTQPQVVAR…LASLAYQRYK (152 aa). The next 4 membrane-spanning stretches (helical) occupy residues 26–46, 73–93, 105–125, and 147–167; these read VVAR…IYGE, AIGV…AYFP, VIGD…GFCF, and AAIT…SLAY.

The protein belongs to the synaptogyrin family. As to quaternary structure, (Microbial infection) Interacts with SFTS phlebovirus protein NSs; may be involved in virus replication. May be tyrosine phosphorylated by Src. As to expression, ubiquitous; low expression in brain.

It localises to the cytoplasmic vesicle membrane. The protein localises to the cytoplasmic vesicle. It is found in the secretory vesicle. Its subcellular location is the synaptic vesicle membrane. The protein resides in the lipid droplet. Its function is as follows. May play a role in regulated exocytosis. In neuronal cells, modulates the localization of synaptophysin/SYP into synaptic-like microvesicles and may therefore play a role in the formation and/or the maturation of this vesicles. May also play a role in GLUT4 storage and transport to the plasma membrane. Functionally, (Microbial infection) May play a role in the assembly of cytoplasmic inclusion bodies required for SFTS phlebovirus replication. This is Synaptogyrin-2 from Homo sapiens (Human).